A 1260-amino-acid chain; its full sequence is Agglutinin-like protein 1 (1260 aa).

An N-terminal signal peptide occupies residues M1–A17. 4 disulfide bridges follow: C73–C150, C96–C112, C205–C298, and C227–C256. ALS repeat units lie at residues T365–P396, T401–P432, and V438–P469. N471 is a glycosylation site (N-linked (GlcNAc...) asparagine). The ALS 4 repeat unit spans residues V474–P505. Residue N507 is glycosylated (N-linked (GlcNAc...) asparagine). The stretch at V510–P541 is one ALS 5 repeat. The N-linked (GlcNAc...) asparagine glycan is linked to N543. The stretch at V546–P577 is one ALS 6 repeat. A glycan (N-linked (GlcNAc...) asparagine) is linked at N579. Residues V582–P613 form an ALS 7 repeat. A glycan (N-linked (GlcNAc...) asparagine) is linked at N615. The stretch at V618–P649 is one ALS 8 repeat. The N-linked (GlcNAc...) asparagine glycan is linked to N651. An ALS 9 repeat occupies V654–P685. N687 carries N-linked (GlcNAc...) asparagine glycosylation. The ALS 10 repeat unit spans residues V690–P721. Residue N723 is glycosylated (N-linked (GlcNAc...) asparagine). The ALS 11 repeat unit spans residues V726 to P757. N759 carries an N-linked (GlcNAc...) asparagine glycan. The ALS 12 repeat unit spans residues V762–Y791. N820, N886, N918, and N973 each carry an N-linked (GlcNAc...) asparagine glycan. 2 stretches are compositionally biased toward polar residues: residues P896–N918 and K964–D979. Disordered stretches follow at residues P896–V924 and S954–P1226. The span at S980 to T995 shows a compositional bias: low complexity. Positions V1002–S1062 are enriched in polar residues. Residues N1045 and N1068 are each glycosylated (N-linked (GlcNAc...) asparagine). Residues H1073 to L1090 are compositionally biased toward polar residues. The span at T1091–A1110 shows a compositional bias: low complexity. Over residues V1111–K1154 the composition is skewed to polar residues. 2 stretches are compositionally biased toward low complexity: residues S1155–S1176 and S1197–P1226. Residue G1238 is the site of GPI-anchor amidated glycine attachment. The propeptide at S1239–I1260 is removed in mature form.

It belongs to the ALS family. In terms of processing, the GPI-anchor is attached to the protein in the endoplasmic reticulum and serves to target the protein to the cell surface. There, the glucosamine-inositol phospholipid moiety is cleaved off and the GPI-modified mannoprotein is covalently attached via its lipidless GPI glycan remnant to the 1,6-beta-glucan of the outer cell wall layer.

Its subcellular location is the cell membrane. The protein resides in the secreted. The protein localises to the cell wall. Major cell surface adhesion protein which mediates both yeast-to-host tissue adherence and yeast aggregation. Acts as a downstream effector of the EFG1 regulatory pathway. Required for rapamycin-induced aggregation of C.albicans. Binds glycans and mediates adherence to endothelial and epithelial cells, thereby playing an important role in the pathogenesis of C.albicans infections. This is Agglutinin-like protein 1 (ALS1) from Candida albicans (strain SC5314 / ATCC MYA-2876) (Yeast).